Reading from the N-terminus, the 55-residue chain is Cicadin (55 aa).

The span at 1–26 (NEYHGFVDKANNENKRKKQQGRDDFV) shows a compositional bias: basic and acidic residues. The disordered stretch occupies residues 1-39 (NEYHGFVDKANNENKRKKQQGRDDFVVKPNNFANRRRKD).

In terms of biological role, possesses antifungal activity against B.cinerea, M.arachidicola, F.oxysporum, R.solani and C.comatus. Suppresses the activity of HIV-1 reverse transcriptase and stimulates the proliferation of murine splenocytes. The chain is Cicadin from Cicada flammata.